A 504-amino-acid chain; its full sequence is L-carnitine/gamma-butyrobetaine antiporter (504 aa).

12 helical membrane-spanning segments follow: residues 10–30, 51–71, 92–112, 143–163, 195–215, 231–251, 263–283, 316–336, 347–367, 398–418, 446–466, and 475–495; these read IEPKVFFPPLIIVGILCWLTV, WGWAFEWYMVVMLFGWFWLVF, IFMMFASCTSAAVLFWGSIEI, GPLPWATYSFLSVAFAYFFFV, FYLVALIFAMGTSLGLATPLV, LDAIIITCWIILNAICVACGL, SYLSFLMLGWVFIVSGASFIM, WTVFYWAWWVIYAIQMSIFLA, LCFGMVLGLTASTWILWTVLG, WAALPLSTATIWGFFILCFIA, LLVRIGWSILVGIIGIVLLAL, and AIIAGGCPLFFVNIMVTLSFI.

This sequence belongs to the BCCT transporter (TC 2.A.15) family. CaiT subfamily. Homotrimer.

It localises to the cell inner membrane. It catalyses the reaction 4-(trimethylamino)butanoate(in) + (R)-carnitine(out) = 4-(trimethylamino)butanoate(out) + (R)-carnitine(in). It functions in the pathway amine and polyamine metabolism; carnitine metabolism. Catalyzes the exchange of L-carnitine for gamma-butyrobetaine. This Escherichia coli O8 (strain IAI1) protein is L-carnitine/gamma-butyrobetaine antiporter.